The primary structure comprises 204 residues: Ricin B-like lectin R40G3 (204 aa).

The region spanning 54 to 200 (TVKVYCRANP…CEGDNQRWKI (147 aa)) is the Ricin B-type lectin domain.

Expressed in shoots and lamina.

In terms of biological role, lectin which binds carbohydrates in vitro. Interacts through its lectin domain with glycan structures containing specific motifs. This Oryza sativa subsp. japonica (Rice) protein is Ricin B-like lectin R40G3.